The primary structure comprises 393 residues: DNA primase large subunit PriL (393 aa).

The [4Fe-4S] cluster site is built by Cys-230, Cys-339, Cys-350, and Cys-356.

The protein belongs to the eukaryotic-type primase large subunit family. Heterodimer of a small subunit (PriS) and a large subunit (PriL). It depends on [4Fe-4S] cluster as a cofactor.

Functionally, regulatory subunit of DNA primase, an RNA polymerase that catalyzes the synthesis of short RNA molecules used as primers for DNA polymerase during DNA replication. Stabilizes and modulates the activity of the small subunit, increasing the rate of DNA synthesis, and conferring RNA synthesis capability. The DNA polymerase activity may enable DNA primase to also catalyze primer extension after primer synthesis. May also play a role in DNA repair. Displays gap-filling and strand-displacement activities. This chain is DNA primase large subunit PriL, found in Pyrococcus abyssi (strain GE5 / Orsay).